A 194-amino-acid chain; its full sequence is Large ribosomal subunit protein bL25 (194 aa).

The protein belongs to the bacterial ribosomal protein bL25 family. CTC subfamily. As to quaternary structure, part of the 50S ribosomal subunit; part of the 5S rRNA/L5/L18/L25 subcomplex. Contacts the 5S rRNA. Binds to the 5S rRNA independently of L5 and L18.

In terms of biological role, this is one of the proteins that binds to the 5S RNA in the ribosome where it forms part of the central protuberance. The chain is Large ribosomal subunit protein bL25 from Thermobifida fusca (strain YX).